We begin with the raw amino-acid sequence, 399 residues long: Elongation factor Tu (399 aa).

One can recognise a tr-type G domain in the interval 10–204 (KPHVNIGTIG…AVDANIPEPE (195 aa)). The tract at residues 19-26 (GHVDHGKT) is G1. A GTP-binding site is contributed by 19-26 (GHVDHGKT). Thr-26 lines the Mg(2+) pocket. Residues 60-64 (GITIN) are G2. The segment at 81–84 (DCPG) is G3. GTP contacts are provided by residues 81-85 (DCPGH) and 136-139 (NKCD). A G4 region spans residues 136 to 139 (NKCD). The segment at 174–176 (SGL) is G5.

Belongs to the TRAFAC class translation factor GTPase superfamily. Classic translation factor GTPase family. EF-Tu/EF-1A subfamily. Monomer.

The protein resides in the cytoplasm. It carries out the reaction GTP + H2O = GDP + phosphate + H(+). Its function is as follows. GTP hydrolase that promotes the GTP-dependent binding of aminoacyl-tRNA to the A-site of ribosomes during protein biosynthesis. This chain is Elongation factor Tu, found in Synechococcus sp. (strain WH7803).